We begin with the raw amino-acid sequence, 399 residues long: Bifunctional enzyme IspD/IspF (399 aa).

Residues 1–235 are 2-C-methyl-D-erythritol 4-phosphate cytidylyltransferase; the sequence is METWALILAA…MVEQPKTTVP (235 aa). Residues 236-399 form a 2-C-methyl-D-erythritol 2,4-cyclodiphosphate synthase region; sequence IVGYGYDVHK…IVIVTAIRIS (164 aa). A divalent metal cation is bound by residues Asp242 and His244. 4-CDP-2-C-methyl-D-erythritol 2-phosphate is bound by residues 242 to 244 and 275 to 276; these read DVH and HS. His283 is a binding site for a divalent metal cation. 4-CDP-2-C-methyl-D-erythritol 2-phosphate contacts are provided by residues 297–299, 302–306, 373–376, and Phe380; these read DIG, FPDSD, and TTEE.

It in the N-terminal section; belongs to the IspD/TarI cytidylyltransferase family. IspD subfamily. The protein in the C-terminal section; belongs to the IspF family. The cofactor is a divalent metal cation.

It carries out the reaction 2-C-methyl-D-erythritol 4-phosphate + CTP + H(+) = 4-CDP-2-C-methyl-D-erythritol + diphosphate. The enzyme catalyses 4-CDP-2-C-methyl-D-erythritol 2-phosphate = 2-C-methyl-D-erythritol 2,4-cyclic diphosphate + CMP. It participates in isoprenoid biosynthesis; isopentenyl diphosphate biosynthesis via DXP pathway; isopentenyl diphosphate from 1-deoxy-D-xylulose 5-phosphate: step 2/6. Its pathway is isoprenoid biosynthesis; isopentenyl diphosphate biosynthesis via DXP pathway; isopentenyl diphosphate from 1-deoxy-D-xylulose 5-phosphate: step 4/6. Bifunctional enzyme that catalyzes the formation of 4-diphosphocytidyl-2-C-methyl-D-erythritol from CTP and 2-C-methyl-D-erythritol 4-phosphate (MEP) (IspD), and catalyzes the conversion of 4-diphosphocytidyl-2-C-methyl-D-erythritol 2-phosphate (CDP-ME2P) to 2-C-methyl-D-erythritol 2,4-cyclodiphosphate (ME-CPP) with a corresponding release of cytidine 5-monophosphate (CMP) (IspF). The protein is Bifunctional enzyme IspD/IspF of Lawsonia intracellularis (strain PHE/MN1-00).